The primary structure comprises 239 residues: Ribose-5-phosphate isomerase A (239 aa).

Substrate-binding positions include 40–43 (SGST), 96–99 (DGAD), and 110–113 (KGGG). The active-site Proton acceptor is the glutamate 119. Position 137 (lysine 137) interacts with substrate.

This sequence belongs to the ribose 5-phosphate isomerase family. In terms of assembly, homodimer.

The catalysed reaction is aldehydo-D-ribose 5-phosphate = D-ribulose 5-phosphate. It functions in the pathway carbohydrate degradation; pentose phosphate pathway; D-ribose 5-phosphate from D-ribulose 5-phosphate (non-oxidative stage): step 1/1. Catalyzes the reversible conversion of ribose-5-phosphate to ribulose 5-phosphate. The polypeptide is Ribose-5-phosphate isomerase A (Methanococcus maripaludis (strain DSM 14266 / JCM 13030 / NBRC 101832 / S2 / LL)).